Here is a 99-residue protein sequence, read N- to C-terminus: Protein Tat (99 aa).

Positions 1–20 are disordered; sequence MELVDPNLDPWNHPGSQPTT. The tract at residues 1-24 is interaction with human CREBBP; sequence MELVDPNLDPWNHPGSQPTTPCTR. Residues 1–48 are transactivation; sequence MELVDPNLDPWNHPGSQPTTPCTRCYCKWCCFHCYWCFTTKGLGISYG. Zn(2+) contacts are provided by C22, C25, and C27. The cysteine-rich stretch occupies residues 22–37; it reads CTRCYCKWCCFHCYWC. N6-acetyllysine; by host PCAF is present on K28. 4 residues coordinate Zn(2+): C30, H33, C34, and C37. Residues 38–48 are core; sequence FTTKGLGISYG. The tract at residues 48–99 is disordered; that stretch reads GRKKRRQRPRTPQSSQIHQDFVPKQPISQARGNPTGPKESKKEVESKAKTDP. A Nuclear localization signal, RNA-binding (TAR), and protein transduction motif is present at residues 49-57; sequence RKKRRQRPR. An interaction with the host capping enzyme RNGTT region spans residues 49–86; sequence RKKRRQRPRTPQSSQIHQDFVPKQPISQARGNPTGPKE. Residues K50 and K51 each carry the N6-acetyllysine; by host EP300 and GCN5L2 modification. Residues R52 and R53 each carry the asymmetric dimethylarginine; by host PRMT6 modification. K71 is covalently cross-linked (Glycyl lysine isopeptide (Lys-Gly) (interchain with G-Cter in ubiquitin)). Positions 85–99 are enriched in basic and acidic residues; sequence KESKKEVESKAKTDP.

It belongs to the lentiviruses Tat family. In terms of assembly, interacts with host CCNT1. Associates with the P-TEFb complex composed at least of Tat, P-TEFb (CDK9 and CCNT1), TAR RNA, RNA Pol II. Recruits the HATs CREBBP, TAF1/TFIID, EP300, PCAF and GCN5L2. Interacts with host KAT5/Tip60; this interaction targets the latter to degradation. Interacts with the host deacetylase SIRT1. Interacts with host capping enzyme RNGTT; this interaction stimulates RNGTT. Binds to host KDR, and to the host integrins ITGAV/ITGB3 and ITGA5/ITGB1. Interacts with host KPNB1/importin beta-1 without previous binding to KPNA1/importin alpha-1. Interacts with EIF2AK2. Interacts with host nucleosome assembly protein NAP1L1; this interaction may be required for the transport of Tat within the nucleus, since the two proteins interact at the nuclear rim. Interacts with host C1QBP/SF2P32; this interaction involves lysine-acetylated Tat. Interacts with the host chemokine receptors CCR2, CCR3 and CXCR4. Interacts with host DPP4/CD26; this interaction may trigger an anti-proliferative effect. Interacts with host LDLR. Interacts with the host extracellular matrix metalloproteinase MMP1. Interacts with host PRMT6; this interaction mediates Tat's methylation. Interacts with, and is ubiquitinated by MDM2/Hdm2. Interacts with host PSMC3 and HTATIP2. Interacts with STAB1; this interaction may overcome SATB1-mediated repression of IL2 and IL2RA (interleukin) in T cells by binding to the same domain than HDAC1. Interacts (when acetylated) with human CDK13, thereby increasing HIV-1 mRNA splicing and promoting the production of the doubly spliced HIV-1 protein Nef. Interacts with host TBP; this interaction modulates the activity of transcriptional pre-initiation complex. Interacts with host RELA. Interacts with host PLSCR1; this interaction negatively regulates Tat transactivation activity by altering its subcellular distribution. In terms of processing, asymmetrical arginine methylation by host PRMT6 seems to diminish the transactivation capacity of Tat and affects the interaction with host CCNT1. Post-translationally, acetylation by EP300, CREBBP, GCN5L2/GCN5 and PCAF regulates the transactivation activity of Tat. EP300-mediated acetylation of Lys-50 promotes dissociation of Tat from the TAR RNA through the competitive binding to PCAF's bromodomain. In addition, the non-acetylated Tat's N-terminus can also interact with PCAF. PCAF-mediated acetylation of Lys-28 enhances Tat's binding to CCNT1. Lys-50 is deacetylated by SIRT1. Polyubiquitination by host MDM2 does not target Tat to degradation, but activates its transactivation function and fosters interaction with CCNT1 and TAR RNA. In terms of processing, phosphorylated by EIF2AK2 on serine and threonine residues adjacent to the basic region important for TAR RNA binding and function. Phosphorylation of Tat by EIF2AK2 is dependent on the prior activation of EIF2AK2 by dsRNA.

Its subcellular location is the host nucleus. The protein resides in the host nucleolus. It is found in the host cytoplasm. It localises to the secreted. Functionally, transcriptional activator that increases RNA Pol II processivity, thereby increasing the level of full-length viral transcripts. Recognizes a hairpin structure at the 5'-LTR of the nascent viral mRNAs referred to as the transactivation responsive RNA element (TAR) and recruits the cyclin T1-CDK9 complex (P-TEFb complex) that will in turn hyperphosphorylate the RNA polymerase II to allow efficient elongation. The CDK9 component of P-TEFb and other Tat-activated kinases hyperphosphorylate the C-terminus of RNA Pol II that becomes stabilized and much more processive. Other factors such as HTATSF1/Tat-SF1, SUPT5H/SPT5, and HTATIP2 are also important for Tat's function. Besides its effect on RNA Pol II processivity, Tat induces chromatin remodeling of proviral genes by recruiting the histone acetyltransferases (HATs) CREBBP, EP300 and PCAF to the chromatin. This also contributes to the increase in proviral transcription rate, especially when the provirus integrates in transcriptionally silent region of the host genome. To ensure maximal activation of the LTR, Tat mediates nuclear translocation of NF-kappa-B by interacting with host RELA. Through its interaction with host TBP, Tat may also modulate transcription initiation. Tat can reactivate a latently infected cell by penetrating in it and transactivating its LTR promoter. In the cytoplasm, Tat is thought to act as a translational activator of HIV-1 mRNAs. In terms of biological role, extracellular circulating Tat can be endocytosed by surrounding uninfected cells via the binding to several surface receptors such as CD26, CXCR4, heparan sulfate proteoglycans (HSPG) or LDLR. Neurons are rarely infected, but they internalize Tat via their LDLR. Through its interaction with nuclear HATs, Tat is potentially able to control the acetylation-dependent cellular gene expression. Modulates the expression of many cellular genes involved in cell survival, proliferation or in coding for cytokines or cytokine receptors. Tat plays a role in T-cell and neurons apoptosis. Tat induced neurotoxicity and apoptosis probably contribute to neuroAIDS. Circulating Tat also acts as a chemokine-like and/or growth factor-like molecule that binds to specific receptors on the surface of the cells, affecting many cellular pathways. In the vascular system, Tat binds to ITGAV/ITGB3 and ITGA5/ITGB1 integrins dimers at the surface of endothelial cells and competes with bFGF for heparin-binding sites, leading to an excess of soluble bFGF. In Homo sapiens (Human), this protein is Protein Tat.